Reading from the N-terminus, the 84-residue chain is RNA-binding protein Hfq (84 aa).

A Sm domain is found at 9–68; it reads DPYLNTLRKERVPVSIYLVNGIKLQGQIESFDQFVILLKNTVSQMVYKHAISTVVPSRPV.

It belongs to the Hfq family. As to quaternary structure, homohexamer.

In terms of biological role, RNA chaperone that binds small regulatory RNA (sRNAs) and mRNAs to facilitate mRNA translational regulation in response to envelope stress, environmental stress and changes in metabolite concentrations. Also binds with high specificity to tRNAs. This Azotobacter vinelandii (strain DJ / ATCC BAA-1303) protein is RNA-binding protein Hfq.